The following is a 207-amino-acid chain: N-(5'-phosphoribosyl)anthranilate isomerase (207 aa).

Belongs to the TrpF family.

The catalysed reaction is N-(5-phospho-beta-D-ribosyl)anthranilate = 1-(2-carboxyphenylamino)-1-deoxy-D-ribulose 5-phosphate. Its pathway is amino-acid biosynthesis; L-tryptophan biosynthesis; L-tryptophan from chorismate: step 3/5. This Legionella pneumophila subsp. pneumophila (strain Philadelphia 1 / ATCC 33152 / DSM 7513) protein is N-(5'-phosphoribosyl)anthranilate isomerase.